Reading from the N-terminus, the 424-residue chain is Serine--tRNA ligase (424 aa).

230 to 232 (TAE) lines the L-serine pocket. 261-263 (RSE) contacts ATP. Glu284 provides a ligand contact to L-serine. 348 to 351 (EISS) lines the ATP pocket. Residue Ser384 coordinates L-serine.

Belongs to the class-II aminoacyl-tRNA synthetase family. Type-1 seryl-tRNA synthetase subfamily. Homodimer. The tRNA molecule binds across the dimer.

It localises to the cytoplasm. The enzyme catalyses tRNA(Ser) + L-serine + ATP = L-seryl-tRNA(Ser) + AMP + diphosphate + H(+). It carries out the reaction tRNA(Sec) + L-serine + ATP = L-seryl-tRNA(Sec) + AMP + diphosphate + H(+). The protein operates within aminoacyl-tRNA biosynthesis; selenocysteinyl-tRNA(Sec) biosynthesis; L-seryl-tRNA(Sec) from L-serine and tRNA(Sec): step 1/1. Its function is as follows. Catalyzes the attachment of serine to tRNA(Ser). Is also able to aminoacylate tRNA(Sec) with serine, to form the misacylated tRNA L-seryl-tRNA(Sec), which will be further converted into selenocysteinyl-tRNA(Sec). This Streptococcus pneumoniae (strain 70585) protein is Serine--tRNA ligase.